Consider the following 338-residue polypeptide: MIELHQVSKSFNVNGKTVEAVKNVSITVEKGEIFGVVGYSGAGKSTLVRCINLLERPDAGQVVIDGKNLSTLSSKELRVARRKIGMIFQGYNLLKTATVYDNIAKPLKLEGVPKDEIETRVNKYLSIVGLEDKRNNYPSQLSGGQKQRVAIARALAHEPEILLSDEATSALDPETTEAILQLLLKINAELGITIFLITHELDVIQRICDRVAVMENGHLVEQGTVLDIFTKAKHATTKRFVGSEASFDIPQDLLEKYVATGKLVSLHFIGDEADEPALALVSRKFDVLPSILAGGIDHLKNGTLGKLLVHLKGDEVEYSKAISYLKESGVVVEEVELL.

The ABC transporter domain occupies 2 to 241 (IELHQVSKSF…AKHATTKRFV (240 aa)). 38–45 (GYSGAGKS) lines the ATP pocket.

Belongs to the ABC transporter superfamily. Methionine importer (TC 3.A.1.24) family. The complex is composed of two ATP-binding proteins (MetN), two transmembrane proteins (MetI) and a solute-binding protein (MetQ).

The protein resides in the cell membrane. It catalyses the reaction L-methionine(out) + ATP + H2O = L-methionine(in) + ADP + phosphate + H(+). The catalysed reaction is D-methionine(out) + ATP + H2O = D-methionine(in) + ADP + phosphate + H(+). Its function is as follows. Part of the ABC transporter complex MetNIQ involved in methionine import. Responsible for energy coupling to the transport system. This Listeria monocytogenes serotype 4b (strain F2365) protein is Methionine import ATP-binding protein MetN 1.